Consider the following 341-residue polypeptide: MVTDQGGGTSEADGGPVRHIPVLLKEVLAALDPAPGKIILDGTFGAGGYASAILDAGADVVALDRDPTAIAAGQSMMHASGGRLKLVHSRFSDLAEHAPAQGLDGVVLDIGVSSMQIDEAERGFSFQKKGPLDMRMSAAGVSAADVVNRAKVSDLIRIFGFLGEEKQAGRIARAIEKRRAETPFETTRDLANLIETVTPRKAKDKIHPATRVFQALRIFVNDELGELAHALFAAERALKPGGRLVVVTFHSLEDRIVKTFFQDRSGKAGGSRHLPLVTARAATFTPVGKPMVAASEEEASRNPRARSAKLRAGVRTEAPSPGADLSIFNLPELASLARLGG.

S-adenosyl-L-methionine-binding positions include 47–49 (GGY), aspartate 64, phenylalanine 91, aspartate 109, and glutamine 116. The segment at 292-319 (VAASEEEASRNPRARSAKLRAGVRTEAP) is disordered.

This sequence belongs to the methyltransferase superfamily. RsmH family.

The protein localises to the cytoplasm. The enzyme catalyses cytidine(1402) in 16S rRNA + S-adenosyl-L-methionine = N(4)-methylcytidine(1402) in 16S rRNA + S-adenosyl-L-homocysteine + H(+). Its function is as follows. Specifically methylates the N4 position of cytidine in position 1402 (C1402) of 16S rRNA. This is Ribosomal RNA small subunit methyltransferase H from Rhizobium meliloti (strain 1021) (Ensifer meliloti).